Reading from the N-terminus, the 374-residue chain is 4-galactosyl-N-acetylglucosaminide 3-alpha-L-fucosyltransferase FUT5 (374 aa).

Over 1-15 the chain is Cytoplasmic; that stretch reads MDLLGAAKPQWPWRR. A helical; Signal-anchor for type II membrane protein transmembrane segment spans residues 16 to 34; sequence CLAGLLFQLLVAVCFFSYL. The Lumenal portion of the chain corresponds to 35–374; sequence RVSRDDATGS…TVRSIAAWFN (340 aa). Residues Asn60, Asn105, Asn167, and Asn198 are each glycosylated (N-linked (GlcNAc...) asparagine).

This sequence belongs to the glycosyltransferase 10 family.

It localises to the golgi apparatus. It is found in the golgi stack membrane. It carries out the reaction a beta-D-galactosyl-(1-&gt;3)-N-acetyl-beta-D-glucosaminyl derivative + GDP-beta-L-fucose = a beta-D-galactosyl-(1-&gt;3)-[alpha-L-fucosyl-(1-&gt;4)]-N-acetyl-beta-D-glucosaminyl derivative + GDP + H(+). The catalysed reaction is an N-acetyl-alpha-neuraminyl-(2-&gt;3)-beta-D-galactosyl-(1-&gt;4)-N-acetyl-beta-D-glucosaminyl derivative + GDP-beta-L-fucose = an alpha-Neu5Ac-(2-&gt;3)-beta-D-Gal-(1-&gt;4)-[alpha-L-Fuc-(1-&gt;3)]-beta-D-GlcNAc derivative + GDP + H(+). It catalyses the reaction an alpha-Neu5Ac-(2-&gt;3)-beta-D-Gal-(1-&gt;4)-beta-D-GlcNAc-(1-&gt;3)-beta-D-Gal-(1-&gt;4)-[alpha-L-Fuc-(1-&gt;3)]-beta-D-GlcNAc derivative + GDP-beta-L-fucose = an alpha-Neu5Ac-(2-&gt;3)-beta-D-Gal-(1-&gt;4)-[alpha-L-Fuc-(1-&gt;3)]-beta-D-GlcNAc-(1-&gt;3)-beta-D-Gal-(1-&gt;4)-[alpha-L-Fuc-(1-&gt;3)]-beta-D-GlcNAc derivative + GDP + H(+). The enzyme catalyses a beta-D-galactosyl-(1-&gt;4)-N-acetyl-beta-D-glucosaminyl derivative + GDP-beta-L-fucose = a beta-D-galactosyl-(1-&gt;4)-[alpha-L-fucosyl-(1-&gt;3)]-N-acetyl-beta-D-glucosaminyl derivative + GDP + H(+). It carries out the reaction a neolactoside nLc4Cer + GDP-beta-L-fucose = a neolactoside III(3)-alpha-Fuc-nLc4Cer + GDP + H(+). The catalysed reaction is a neolactoside nLc6Cer + GDP-beta-L-fucose = beta-D-galactosyl-(1-&gt;4)-N-acetyl-beta-D-glucosaminyl-(1-&gt;3)-beta-D-galactosyl-(1-&gt;4)-[alpha-L-fucosyl-(1-&gt;3)]-N-acetyl-beta-D-glucosaminyl-(1-&gt;3)-beta-D-galactosyl-(1-&gt;4)-beta-D-glucosyl-(1&lt;-&gt;1')-ceramide + GDP + H(+). It catalyses the reaction a neolactoside nLc6Cer(d18:1(4E)) + GDP-beta-L-fucose = a neolactoside III(3)-alpha-Fuc-nLc6Cer(d18:1(4E)) + GDP + H(+). The enzyme catalyses a neolactoside nLc4Cer(d18:1(4E)) + GDP-beta-L-fucose = a neolactoside III(3)-alpha-Fuc-nLc4Cer(d18:1(4E)) + GDP + H(+). It carries out the reaction a neolactoside VI(3)-alpha-NeuNAc-nLc6Cer + GDP-beta-L-fucose = a neolactoside VI(3)-alpha-NeuAc,III(3)-alphaFuc-nLc6Cer + GDP + H(+). The catalysed reaction is beta-D-galactosyl-(1-&gt;4)-N-acetyl-D-glucosamine + GDP-beta-L-fucose = beta-D-galactosyl-(1-&gt;4)-[alpha-L-fucosyl-(1-&gt;3)]-N-acetyl-D-glucosamine + GDP + H(+). It catalyses the reaction N-acetyl-alpha-neuraminosyl-(2-&gt;3)-beta-D-galactosyl-(1-&gt;4)-N-acetyl-beta-D-glucosamine + GDP-beta-L-fucose = N-acetyl-alpha-neuraminosyl-(2-&gt;3)-beta-D-galactosyl-(1-&gt;4)-[alpha-L-fucosyl-(1-&gt;3)]-N-acetyl-beta-D-glucosamine + GDP + H(+). The enzyme catalyses alpha-L-Fuc-(1-&gt;2)-beta-D-Gal-(1-&gt;4)-D-GlcNAc + GDP-beta-L-fucose = alpha-L-Fuc-(1-&gt;2)-beta-D-Gal-(1-&gt;4)-[alpha-L-Fuc-(1-&gt;3)]-D-GlcNAc + GDP + H(+). It carries out the reaction an alpha-Neu5Ac-(2-&gt;3)-beta-D-Gal-(1-&gt;3)-D-GlcNAc derivative + GDP-beta-L-fucose = an alpha-Neu5Ac-(2-&gt;3)-beta-D-Gal-(1-&gt;3)-[alpha-L-Fuc-(1-&gt;4)]-beta-D-GlcNAc derivative + GDP + H(+). The protein operates within protein modification; protein glycosylation. In terms of biological role, catalyzes preferentially the transfer of L-fucose, from a guanosine diphosphate-beta-L-fucose, to the N-acetyl-beta-D-glucosamine (GlcNAc) of an N-acetyllactosamine unit (type 2 chain) of an oligosaccharide, or a glycoprotein- and a glycolipid-linked N-acetyllactosamine unit via an alpha (1,3) linkage and participates in the surface expression of VIM-2, Lewis X/SSEA-1 and sialyl Lewis X antigens. Preferentially transfers fucose to the GlcNAc of an internal N-acetyllactosamine unit of a poly-N-acetyllactosamine chain acceptor substrate. Also catalyzes to a lesser extend the transfer of L-fucose to the GlcNAc of a type 1 (beta-D-galactosyl-(1-&gt;3)-N-acetyl-beta-D-glucosaminyl) or H-type 1 (alpha-L-Fuc-(1-&gt;2)-beta-D-Gal-(1-&gt;3)-D-GlcNAc) chain oligosaccharide via an alpha (1,4) linkage. Preferentially catalyzes sialylated type 2 oligosaccharide acceptors over neutral type 2 or H type 2 (alpha-L-Fuc-(1-&gt;2)-beta-D-Gal-(1-&gt;4)-D-GlcNAc) oligosaccharide acceptors. Lactose-based structures are also acceptor substrates. The protein is 4-galactosyl-N-acetylglucosaminide 3-alpha-L-fucosyltransferase FUT5 of Hylobates lar (Lar gibbon).